The primary structure comprises 332 residues: Biotin synthase (332 aa).

The 230-residue stretch at 53–282 (HFGKKVKLNM…TKEIRISGGR (230 aa)) folds into the Radical SAM core domain. 3 residues coordinate [4Fe-4S] cluster: Cys71, Cys75, and Cys78. The [2Fe-2S] cluster site is built by Cys115, Cys147, Cys207, and Arg277.

This sequence belongs to the radical SAM superfamily. Biotin synthase family. As to quaternary structure, homodimer. It depends on [4Fe-4S] cluster as a cofactor. The cofactor is [2Fe-2S] cluster.

It carries out the reaction (4R,5S)-dethiobiotin + (sulfur carrier)-SH + 2 reduced [2Fe-2S]-[ferredoxin] + 2 S-adenosyl-L-methionine = (sulfur carrier)-H + biotin + 2 5'-deoxyadenosine + 2 L-methionine + 2 oxidized [2Fe-2S]-[ferredoxin]. The protein operates within cofactor biosynthesis; biotin biosynthesis; biotin from 7,8-diaminononanoate: step 2/2. In terms of biological role, catalyzes the conversion of dethiobiotin (DTB) to biotin by the insertion of a sulfur atom into dethiobiotin via a radical-based mechanism. The sequence is that of Biotin synthase from Bacillus cereus (strain G9842).